The following is a 206-amino-acid chain: Guanylate kinase (206 aa).

The 181-residue stretch at 13–193 (PLLLVVSGPS…AVSEIMSIIS (181 aa)) folds into the Guanylate kinase-like domain. 20 to 27 (GPSGVGKD) lines the ATP pocket.

This sequence belongs to the guanylate kinase family.

The protein localises to the cytoplasm. It carries out the reaction GMP + ATP = GDP + ADP. In terms of biological role, essential for recycling GMP and indirectly, cGMP. In Dehalococcoides mccartyi (strain ATCC BAA-2266 / KCTC 15142 / 195) (Dehalococcoides ethenogenes (strain 195)), this protein is Guanylate kinase.